A 226-amino-acid polypeptide reads, in one-letter code: MSLSAFYVTGTDTGIGKTFVSCILLHMLRGRGQRAVGMKPVASGCTYSDTGWRNEDALALQAASDPTPAYDLINPYALPAAVAPEIAAIEAGVTVALEPLSAAFTQLRAQADVVVVEGVGGWATPLNATIDQATLVRALEIPVVLVVGLRLGCLNHARLSTTAIMADGLRCIGWIANTIDPHMARIEENLALLRQRLPIPYWGHLPHIPPGINPATLAARLHPQGD.

Residue 14–19 coordinates ATP; that stretch reads GIGKTF. Thr-18 serves as a coordination point for Mg(2+). Lys-39 is an active-site residue. Residue Ser-43 participates in substrate binding. ATP is bound by residues Asp-56, 117 to 120, 177 to 178, 206 to 208, and Asn-213; these read EGVG, NT, and PHI. Mg(2+) is bound by residues Asp-56 and Glu-117.

It belongs to the dethiobiotin synthetase family. In terms of assembly, homodimer. Requires Mg(2+) as cofactor.

The protein localises to the cytoplasm. It catalyses the reaction (7R,8S)-7,8-diammoniononanoate + CO2 + ATP = (4R,5S)-dethiobiotin + ADP + phosphate + 3 H(+). It functions in the pathway cofactor biosynthesis; biotin biosynthesis; biotin from 7,8-diaminononanoate: step 1/2. In terms of biological role, catalyzes a mechanistically unusual reaction, the ATP-dependent insertion of CO2 between the N7 and N8 nitrogen atoms of 7,8-diaminopelargonic acid (DAPA, also called 7,8-diammoniononanoate) to form a ureido ring. In Xylella fastidiosa (strain 9a5c), this protein is ATP-dependent dethiobiotin synthetase BioD.